The sequence spans 544 residues: Phenylalanine--tRNA ligase beta subunit (544 aa).

The B5 domain maps to 270–346 (LEPKTRFLTK…KGYGYENIKV (77 aa)). Residues Asp324, Asp330, Glu333, and Asp334 each contribute to the Mg(2+) site.

The protein belongs to the phenylalanyl-tRNA synthetase beta subunit family. Type 2 subfamily. As to quaternary structure, tetramer of two alpha and two beta subunits. The cofactor is Mg(2+).

Its subcellular location is the cytoplasm. The enzyme catalyses tRNA(Phe) + L-phenylalanine + ATP = L-phenylalanyl-tRNA(Phe) + AMP + diphosphate + H(+). This chain is Phenylalanine--tRNA ligase beta subunit, found in Methanosarcina barkeri (strain Fusaro / DSM 804).